Consider the following 185-residue polypeptide: Intraflagellar transport protein 22 homolog (185 aa).

GTP contacts are provided by residues 10–17, 63–67, and 123–126; these read GPCESGKT, DCGGD, and HKPG. S137 bears the Phosphoserine mark.

Belongs to the small GTPase superfamily. Rab family. As to quaternary structure, component of the IFT complex B, at least composed of IFT20, IFT22, IFT25, IFT27, IFT46, IFT52, TRAF3IP1/IFT54, IFT57, IFT74, IFT80, IFT81, and IFT88. Interacts with IFT88. Interacts with CFAP61.

It is found in the cell projection. Its subcellular location is the cilium. Functionally, small GTPase-like component of the intraflagellar transport (IFT) complex B. The sequence is that of Intraflagellar transport protein 22 homolog (Ift22) from Rattus norvegicus (Rat).